Here is a 221-residue protein sequence, read N- to C-terminus: MKFFATIAALVVAAVAAPVAEADAEASSPMLIERAGPGGINYVQNYNGNLGQFTYNENAGTYSMYWTNGVSGDFVVGLGWSTGAARSITYSSSYTASGGSYLSVYGWINSPQAEYYIVESYGSYNPCGAGQSGVTQLGTVVSDGATYTVCTDERVNEPSITGTSTFKQYWSVRQTKRTSGTVTTGNHFAYWAKYGFGNSYNFQVMAVEAFSGTGSASVTVS.

The first 22 residues, 1 to 22 (MKFFATIAALVVAAVAAPVAEA), serve as a signal peptide directing secretion. The 193-residue stretch at 29–221 (PMLIERAGPG…GTGSASVTVS (193 aa)) folds into the GH11 domain. The active-site Nucleophile is the Glu-114. The active-site Proton donor is Glu-208.

This sequence belongs to the glycosyl hydrolase 11 (cellulase G) family.

Its subcellular location is the secreted. It catalyses the reaction Endohydrolysis of (1-&gt;4)-beta-D-xylosidic linkages in xylans.. The protein operates within glycan degradation; xylan degradation. In terms of biological role, endo-1,4-beta-xylanase involved in the hydrolysis of xylan, a major structural heterogeneous polysaccharide found in plant biomass representing the second most abundant polysaccharide in the biosphere, after cellulose. Hydrolyzes xylans from oat spelt and birchwood at similar rates, but it has no detectable activity toward Avicel or carboxymethyl cellulose. In Aureobasidium pullulans (Black yeast), this protein is Endo-1,4-beta-xylanase 1 (xynI).